Reading from the N-terminus, the 370-residue chain is 4-hydroxy-3-methylbut-2-en-1-yl diphosphate synthase (flavodoxin) (370 aa).

Positions 268, 271, 303, and 310 each coordinate [4Fe-4S] cluster.

The protein belongs to the IspG family. The cofactor is [4Fe-4S] cluster.

The enzyme catalyses (2E)-4-hydroxy-3-methylbut-2-enyl diphosphate + oxidized [flavodoxin] + H2O + 2 H(+) = 2-C-methyl-D-erythritol 2,4-cyclic diphosphate + reduced [flavodoxin]. It participates in isoprenoid biosynthesis; isopentenyl diphosphate biosynthesis via DXP pathway; isopentenyl diphosphate from 1-deoxy-D-xylulose 5-phosphate: step 5/6. Converts 2C-methyl-D-erythritol 2,4-cyclodiphosphate (ME-2,4cPP) into 1-hydroxy-2-methyl-2-(E)-butenyl 4-diphosphate. The protein is 4-hydroxy-3-methylbut-2-en-1-yl diphosphate synthase (flavodoxin) of Bacillus cereus (strain AH187).